A 194-amino-acid polypeptide reads, in one-letter code: MIGRLRGILAYKQPPWLVIDVGGVGYELEAPMSTFYDLPDVGRDVILFTHYAQKEDSVSLYGFLREGERRLFRDVQKVTGIGAKIALAVLSGVTVDEFARLITSGDITALTRIPGIGKKTAERMVVELRDRAADFSSGAPITGQLGPDAISEATVALQQLGYKPAEAARMARDAGAEGGEVATVIRKALQAALR.

The tract at residues M1–L64 is domain I. The interval R65 to P140 is domain II. The interval P140–Q144 is flexible linker. The interval L145–R194 is domain III.

It belongs to the RuvA family. As to quaternary structure, homotetramer. Forms an RuvA(8)-RuvB(12)-Holliday junction (HJ) complex. HJ DNA is sandwiched between 2 RuvA tetramers; dsDNA enters through RuvA and exits via RuvB. An RuvB hexamer assembles on each DNA strand where it exits the tetramer. Each RuvB hexamer is contacted by two RuvA subunits (via domain III) on 2 adjacent RuvB subunits; this complex drives branch migration. In the full resolvosome a probable DNA-RuvA(4)-RuvB(12)-RuvC(2) complex forms which resolves the HJ.

Its subcellular location is the cytoplasm. Functionally, the RuvA-RuvB-RuvC complex processes Holliday junction (HJ) DNA during genetic recombination and DNA repair, while the RuvA-RuvB complex plays an important role in the rescue of blocked DNA replication forks via replication fork reversal (RFR). RuvA specifically binds to HJ cruciform DNA, conferring on it an open structure. The RuvB hexamer acts as an ATP-dependent pump, pulling dsDNA into and through the RuvAB complex. HJ branch migration allows RuvC to scan DNA until it finds its consensus sequence, where it cleaves and resolves the cruciform DNA. The protein is Holliday junction branch migration complex subunit RuvA of Xanthomonas oryzae pv. oryzae (strain MAFF 311018).